The primary structure comprises 307 residues: UDP-3-O-acyl-N-acetylglucosamine deacetylase (307 aa).

Zn(2+) is bound by residues His-78, His-237, and Asp-241. His-264 acts as the Proton donor in catalysis.

It belongs to the LpxC family. It depends on Zn(2+) as a cofactor.

The enzyme catalyses a UDP-3-O-[(3R)-3-hydroxyacyl]-N-acetyl-alpha-D-glucosamine + H2O = a UDP-3-O-[(3R)-3-hydroxyacyl]-alpha-D-glucosamine + acetate. Its pathway is glycolipid biosynthesis; lipid IV(A) biosynthesis; lipid IV(A) from (3R)-3-hydroxytetradecanoyl-[acyl-carrier-protein] and UDP-N-acetyl-alpha-D-glucosamine: step 2/6. Its function is as follows. Catalyzes the hydrolysis of UDP-3-O-myristoyl-N-acetylglucosamine to form UDP-3-O-myristoylglucosamine and acetate, the committed step in lipid A biosynthesis. In Azoarcus sp. (strain BH72), this protein is UDP-3-O-acyl-N-acetylglucosamine deacetylase.